We begin with the raw amino-acid sequence, 345 residues long: tRNA N6-adenosine threonylcarbamoyltransferase (345 aa).

Residues H109 and H113 each contribute to the Fe cation site. Substrate contacts are provided by residues 136 to 140 (TVSGG), D169, G182, D186, and N284. Residue D312 coordinates Fe cation.

This sequence belongs to the KAE1 / TsaD family. Fe(2+) serves as cofactor.

The protein resides in the cytoplasm. The enzyme catalyses L-threonylcarbamoyladenylate + adenosine(37) in tRNA = N(6)-L-threonylcarbamoyladenosine(37) in tRNA + AMP + H(+). In terms of biological role, required for the formation of a threonylcarbamoyl group on adenosine at position 37 (t(6)A37) in tRNAs that read codons beginning with adenine. Is involved in the transfer of the threonylcarbamoyl moiety of threonylcarbamoyl-AMP (TC-AMP) to the N6 group of A37, together with TsaE and TsaB. TsaD likely plays a direct catalytic role in this reaction. The polypeptide is tRNA N6-adenosine threonylcarbamoyltransferase (Prosthecochloris aestuarii (strain DSM 271 / SK 413)).